An 845-amino-acid chain; its full sequence is SLIT and NTRK-like protein 2 (845 aa).

The first 21 residues, 1 to 21, serve as a signal peptide directing secretion; sequence MLSGVWFLSVLTVAGILQTES. Topologically, residues 22-621 are extracellular; sequence RKTAKDICKI…LHTEVPLSVL (600 aa). 2 disulfides stabilise this stretch: Cys-29–Cys-35 and Cys-33–Cys-46. LRR repeat units follow at residues 63 to 84, 87 to 108, 111 to 132, 135 to 156, 159 to 180, and 182 to 203; these read RIYQLFLNGNLLTRLYPNEFVN, NAVTLHLGNNGLQEIRTGAFSG, TLKRLHLNNNKLEILREDTFLG, SLEYLQADYNYISAIEAGAFSK, KLKVLILNDNLLLSLPSNVFRF, and LLTHLDLRGNRLKVMPFAGVLE. N-linked (GlcNAc...) asparagine glycosylation is present at Asn-84. Positions 167–215 are required for interaction with PTPRD; the sequence is DNLLLSLPSNVFRFVLLTHLDLRGNRLKVMPFAGVLEHIGGIMEIQLEE. The region spanning 216–265 is the LRRCT 1 domain; it reads NPWNCTCDLLPLKAWLDTITVFVGEIVCETPFRLHGKDVTQLTRQDLCPR. 2 disulfide bridges follow: Cys-220–Cys-243 and Cys-222–Cys-263. A disordered region spans residues 263-321; sequence CPRKSASDSSQRGSHADTHVQRLSPTMNPALNPTRAPKASRPPKMRNRPTPRVTVSKDR. Residues 283–293 are compositionally biased toward polar residues; sequence QRLSPTMNPAL. One can recognise an LRRNT domain in the interval 331-373; sequence QTKSPVPLTCPSSCVCTSQSSDNGLNVNCQERKFTNISDLQPK. LRR repeat units lie at residues 376–397, 400–421, 424–445, 448–469, 472–493, and 495–516; these read SPKKLYLTGNYLQTVYKNDLLE, SLDLLHLGNNRIAVIQEGAFTN, SLRRLYLNGNYLEVLYPSMFDG, SLQYLYLEYNVIKEIKPLTFDA, NLQLLFLNNNLLRSLPDNIFGG, and ALTRLNLRNNHFSHLPVKGVLD. An N-linked (GlcNAc...) asparagine glycan is attached at Asn-421. Residues 529 to 580 enclose the LRRCT 2 domain; the sequence is NPWDCTCDIMGLKDWTEHANSPVIINEVTCESPAKHAGEILKFLGREAICPD. The helical transmembrane segment at 622–642 threads the bilayer; it reads ILGLLVVFILSVCFGAGLFVF. Residues 643-845 lie on the Cytoplasmic side of the membrane; it reads VLKRRKGVPS…LEKQTAISQL (203 aa). Position 756 is a phosphotyrosine (Tyr-756).

Belongs to the SLITRK family. In terms of assembly, interacts with PTPRD; this interaction is PTPRD splicing-dependent and may induce pre-synaptic differentiation. Interacts with NTRK2. As to expression, expressed predominantly in the cerebral cortex of the brain but also at low levels in the spinal cord and medulla. Also expressed in some astrocytic brain tumors such as astrocytomas, oligodendrogliomas, glioblastomas, gangliogliomas and primitive neuroectodermal tumors.

The protein localises to the membrane. The protein resides in the cell membrane. It is found in the cell projection. Its subcellular location is the dendrite. Its function is as follows. It is involved in synaptogenesis and promotes excitatory synapse differentiation. Suppresses neurite outgrowth. Involved in the negative regulation of NTRK2. This chain is SLIT and NTRK-like protein 2 (SLITRK2), found in Homo sapiens (Human).